Here is a 377-residue protein sequence, read N- to C-terminus: Succinyl-diaminopimelate desuccinylase (377 aa).

His67 serves as a coordination point for Zn(2+). Residue Asp69 is part of the active site. Position 100 (Asp100) interacts with Zn(2+). Glu134 serves as the catalytic Proton acceptor. 3 residues coordinate Zn(2+): Glu135, Glu163, and His349.

The protein belongs to the peptidase M20A family. DapE subfamily. Homodimer. The cofactor is Zn(2+). Requires Co(2+) as cofactor.

The enzyme catalyses N-succinyl-(2S,6S)-2,6-diaminopimelate + H2O = (2S,6S)-2,6-diaminopimelate + succinate. It participates in amino-acid biosynthesis; L-lysine biosynthesis via DAP pathway; LL-2,6-diaminopimelate from (S)-tetrahydrodipicolinate (succinylase route): step 3/3. Catalyzes the hydrolysis of N-succinyl-L,L-diaminopimelic acid (SDAP), forming succinate and LL-2,6-diaminopimelate (DAP), an intermediate involved in the bacterial biosynthesis of lysine and meso-diaminopimelic acid, an essential component of bacterial cell walls. The polypeptide is Succinyl-diaminopimelate desuccinylase (Actinobacillus pleuropneumoniae serotype 3 (strain JL03)).